Reading from the N-terminus, the 222-residue chain is Thiamine-phosphate synthase (222 aa).

Residues 42–46 (QYRDK) and Asn74 contribute to the 4-amino-2-methyl-5-(diphosphooxymethyl)pyrimidine site. Mg(2+) contacts are provided by Asp75 and Asp94. Thr113 provides a ligand contact to 4-amino-2-methyl-5-(diphosphooxymethyl)pyrimidine. A 2-[(2R,5Z)-2-carboxy-4-methylthiazol-5(2H)-ylidene]ethyl phosphate-binding site is contributed by 140–142 (SAT). Lys143 contributes to the 4-amino-2-methyl-5-(diphosphooxymethyl)pyrimidine binding site. Gly169 lines the 2-[(2R,5Z)-2-carboxy-4-methylthiazol-5(2H)-ylidene]ethyl phosphate pocket.

Belongs to the thiamine-phosphate synthase family. Requires Mg(2+) as cofactor.

The enzyme catalyses 2-[(2R,5Z)-2-carboxy-4-methylthiazol-5(2H)-ylidene]ethyl phosphate + 4-amino-2-methyl-5-(diphosphooxymethyl)pyrimidine + 2 H(+) = thiamine phosphate + CO2 + diphosphate. The catalysed reaction is 2-(2-carboxy-4-methylthiazol-5-yl)ethyl phosphate + 4-amino-2-methyl-5-(diphosphooxymethyl)pyrimidine + 2 H(+) = thiamine phosphate + CO2 + diphosphate. It catalyses the reaction 4-methyl-5-(2-phosphooxyethyl)-thiazole + 4-amino-2-methyl-5-(diphosphooxymethyl)pyrimidine + H(+) = thiamine phosphate + diphosphate. It functions in the pathway cofactor biosynthesis; thiamine diphosphate biosynthesis; thiamine phosphate from 4-amino-2-methyl-5-diphosphomethylpyrimidine and 4-methyl-5-(2-phosphoethyl)-thiazole: step 1/1. Functionally, condenses 4-methyl-5-(beta-hydroxyethyl)thiazole monophosphate (THZ-P) and 2-methyl-4-amino-5-hydroxymethyl pyrimidine pyrophosphate (HMP-PP) to form thiamine monophosphate (TMP). In Marinobacter nauticus (strain ATCC 700491 / DSM 11845 / VT8) (Marinobacter aquaeolei), this protein is Thiamine-phosphate synthase.